The chain runs to 66 residues: Large ribosomal subunit protein bL33c (66 aa).

It belongs to the bacterial ribosomal protein bL33 family.

The protein resides in the plastid. The protein is Large ribosomal subunit protein bL33c of Cuscuta gronovii (Common dodder).